The sequence spans 234 residues: MNIKWLGHSAFHIETAKAKILIDPFFTGNPAFRDEERKAATAGLTHILLTHGHGDHVGDTVAIAKETGATVLANFDLCMWLGRQGISKLEPGNTGGTIQLGSFTATFVNALHSSAQITDDGVSHSLGNANGLVLHFDDEPTLYHMGDTEIFSDMALVQELHEPEIGIVPIGDRFTMGGAVAALACQRYFKFNTTIPCHYGSFPIIDQTPETFIAGMDGASTLVATPEVGGAVTL.

Belongs to the UPF0173 family.

The polypeptide is UPF0173 metal-dependent hydrolase R01310 (Rhizobium meliloti (strain 1021) (Ensifer meliloti)).